Consider the following 148-residue polypeptide: Leghemoglobin 3 (148 aa).

A Globin domain is found at 2 to 148 (GFTEKQEALV…LSAAIKKAMS (147 aa)). Nitrated tyrosine is present on tyrosine 30. Serine 45 is a binding site for heme b. Serine 45 is subject to Phosphoserine. Position 63 (histidine 63) interacts with O2. Heme b is bound by residues lysine 66, histidine 95, and lysine 98. Nitrated tyrosine is present on tyrosine 136.

Belongs to the plant globin family. Monomer. Nitrated in effective nodules and particularly in hypoxic conditions; this mechanism may play a protective role in the symbiosis by buffering toxic peroxynitrite NO(2)(-). Nitration level decrease during nodule senescence. In terms of processing, phosphorylation at Ser-45 disrupts the molecular environment of its porphyrin ring oxygen binding pocket, thus leading to a reduced oxygen consumption and to the delivery of oxygen O(2) to symbiosomes. Stem nodules.

Its subcellular location is the cytoplasm. The protein localises to the cytosol. It localises to the nucleus. Functionally, leghemoglobin that reversibly binds oxygen O(2) through a pentacoordinated heme iron. In stem nodules, facilitates the diffusion of oxygen to the bacteroids while preventing the bacterial nitrogenase from being inactivated by buffering dioxygen, nitric oxide and carbon monoxide, and promoting the formation of reactive oxygen species (ROS, e.g. H(2)O(2)). This role is essential for symbiotic nitrogen fixation (SNF). The sequence is that of Leghemoglobin 3 from Sesbania rostrata.